Consider the following 363-residue polypeptide: Fructose-bisphosphate aldolase 2 (363 aa).

S61 contributes to the D-glyceraldehyde 3-phosphate binding site. D109 functions as the Proton donor in the catalytic mechanism. Zn(2+) is bound by residues H110, D144, E174, and H226. G227 serves as a coordination point for dihydroxyacetone phosphate. Zn(2+) is bound at residue H264. Residue 265 to 267 participates in dihydroxyacetone phosphate binding; it reads GGS.

This sequence belongs to the class II fructose-bisphosphate aldolase family. Homodimer. The cofactor is Zn(2+).

It catalyses the reaction beta-D-fructose 1,6-bisphosphate = D-glyceraldehyde 3-phosphate + dihydroxyacetone phosphate. The protein operates within carbohydrate degradation; glycolysis; D-glyceraldehyde 3-phosphate and glycerone phosphate from D-glucose: step 4/4. Its function is as follows. Catalyzes the aldol condensation of dihydroxyacetone phosphate (DHAP or glycerone-phosphate) with glyceraldehyde 3-phosphate (G3P) to form fructose 1,6-bisphosphate (FBP) in gluconeogenesis and the reverse reaction in glycolysis. The sequence is that of Fructose-bisphosphate aldolase 2 (FBA2) from Paracoccidioides lutzii (strain ATCC MYA-826 / Pb01) (Paracoccidioides brasiliensis).